The primary structure comprises 170 residues: F107 fimbrial protein (170 aa).

The N-terminal stretch at 1–21 (MKRLVFISFVALSMTAGSAMA) is a signal peptide. Residues Cys37 and Cys78 are joined by a disulfide bond.

This sequence belongs to the fimbrial protein family.

Its subcellular location is the fimbrium. Fimbriae (also called pili), polar filaments radiating from the surface of the bacterium to a length of 0.5-1.5 micrometers and numbering 100-300 per cell, enable bacteria to colonize the epithelium of specific host organs. The protein is F107 fimbrial protein (fedA) of Escherichia coli.